Here is a 360-residue protein sequence, read N- to C-terminus: Phospho-N-acetylmuramoyl-pentapeptide-transferase (360 aa).

10 helical membrane passes run 25–45, 71–91, 94–114, 129–148, 168–188, 199–219, 239–259, 263–283, 288–308, and 337–357; these read TGGA…WIID, TPTM…VLWA, LNPY…VGFY, SGRT…CYAL, TAIY…VGAG, GLAI…SYLA, LAVL…FNAP, IFMG…IAVA, FVLA…IVQV, and QIVI…LSTL.

This sequence belongs to the glycosyltransferase 4 family. MraY subfamily. Mg(2+) is required as a cofactor.

The protein localises to the cell inner membrane. The catalysed reaction is UDP-N-acetyl-alpha-D-muramoyl-L-alanyl-gamma-D-glutamyl-meso-2,6-diaminopimeloyl-D-alanyl-D-alanine + di-trans,octa-cis-undecaprenyl phosphate = di-trans,octa-cis-undecaprenyl diphospho-N-acetyl-alpha-D-muramoyl-L-alanyl-D-glutamyl-meso-2,6-diaminopimeloyl-D-alanyl-D-alanine + UMP. It participates in cell wall biogenesis; peptidoglycan biosynthesis. Its function is as follows. Catalyzes the initial step of the lipid cycle reactions in the biosynthesis of the cell wall peptidoglycan: transfers peptidoglycan precursor phospho-MurNAc-pentapeptide from UDP-MurNAc-pentapeptide onto the lipid carrier undecaprenyl phosphate, yielding undecaprenyl-pyrophosphoryl-MurNAc-pentapeptide, known as lipid I. This is Phospho-N-acetylmuramoyl-pentapeptide-transferase from Rhodopseudomonas palustris (strain BisA53).